The primary structure comprises 297 residues: uncharacterized protein (297 aa).

A compositionally biased stretch (polar residues) spans Met-1–Ala-12. A disordered region spans residues Met-1 to Pro-21.

The protein to B.subtilis XkdY/XepA.

This is an uncharacterized protein from Bacillus subtilis (strain 168).